The primary structure comprises 382 residues: D-galactonate dehydratase 1 (382 aa).

Asp183 lines the Mg(2+) pocket. Residue His185 is the Proton donor of the active site. Residues Glu209 and Glu235 each contribute to the Mg(2+) site. His285 serves as the catalytic Proton acceptor.

This sequence belongs to the mandelate racemase/muconate lactonizing enzyme family. GalD subfamily. It depends on Mg(2+) as a cofactor.

It carries out the reaction D-galactonate = 2-dehydro-3-deoxy-D-galactonate + H2O. It functions in the pathway carbohydrate acid metabolism; D-galactonate degradation; D-glyceraldehyde 3-phosphate and pyruvate from D-galactonate: step 1/3. Catalyzes the dehydration of D-galactonate to 2-keto-3-deoxy-D-galactonate. This Escherichia coli (strain SMS-3-5 / SECEC) protein is D-galactonate dehydratase 1.